The chain runs to 321 residues: Tyrosine recombinase XerC (321 aa).

In terms of domain architecture, Core-binding (CB) spans 16 to 107 (SDIGQQIVRW…GLRSFARFLE (92 aa)). A Tyr recombinase domain is found at 128–315 (SVPKPIHMSA…DSERLLDVYR (188 aa)). Active-site residues include R173, K199, H267, R270, and H293. The active-site O-(3'-phospho-DNA)-tyrosine intermediate is the Y302.

It belongs to the 'phage' integrase family. XerC subfamily. As to quaternary structure, forms a cyclic heterotetrameric complex composed of two molecules of XerC and two molecules of XerD.

It is found in the cytoplasm. Its function is as follows. Site-specific tyrosine recombinase, which acts by catalyzing the cutting and rejoining of the recombining DNA molecules. The XerC-XerD complex is essential to convert dimers of the bacterial chromosome into monomers to permit their segregation at cell division. It also contributes to the segregational stability of plasmids. The polypeptide is Tyrosine recombinase XerC (Nitrobacter winogradskyi (strain ATCC 25391 / DSM 10237 / CIP 104748 / NCIMB 11846 / Nb-255)).